A 323-amino-acid chain; its full sequence is UPF0065 protein BP0148 (323 aa).

The signal sequence occupies residues 1–24 (MKPFSLLRRIATIALLMAASSAHA).

The protein belongs to the UPF0065 (bug) family.

Its subcellular location is the periplasm. This is UPF0065 protein BP0148 from Bordetella pertussis (strain Tohama I / ATCC BAA-589 / NCTC 13251).